We begin with the raw amino-acid sequence, 426 residues long: Enolase 1 (426 aa).

Q163 is a (2R)-2-phosphoglycerate binding site. Catalysis depends on E205, which acts as the Proton donor. Residues D242, E283, and D310 each coordinate Mg(2+). The (2R)-2-phosphoglycerate site is built by K335, R364, S365, and K386. Catalysis depends on K335, which acts as the Proton acceptor.

The protein belongs to the enolase family. Mg(2+) serves as cofactor.

Its subcellular location is the cytoplasm. It is found in the secreted. The protein resides in the cell surface. It carries out the reaction (2R)-2-phosphoglycerate = phosphoenolpyruvate + H2O. It participates in carbohydrate degradation; glycolysis; pyruvate from D-glyceraldehyde 3-phosphate: step 4/5. Functionally, catalyzes the reversible conversion of 2-phosphoglycerate (2-PG) into phosphoenolpyruvate (PEP). It is essential for the degradation of carbohydrates via glycolysis. The sequence is that of Enolase 1 from Streptomyces coelicolor (strain ATCC BAA-471 / A3(2) / M145).